A 373-amino-acid polypeptide reads, in one-letter code: UDP-N-acetylglucosamine--N-acetylmuramyl-(pentapeptide) pyrophosphoryl-undecaprenol N-acetylglucosamine transferase (373 aa).

Residues Thr-15–Gly-17, Asn-126, Arg-170, Ser-198, and Gln-300 contribute to the UDP-N-acetyl-alpha-D-glucosamine site.

The protein belongs to the glycosyltransferase 28 family. MurG subfamily.

The protein resides in the cell inner membrane. The catalysed reaction is di-trans,octa-cis-undecaprenyl diphospho-N-acetyl-alpha-D-muramoyl-L-alanyl-D-glutamyl-meso-2,6-diaminopimeloyl-D-alanyl-D-alanine + UDP-N-acetyl-alpha-D-glucosamine = di-trans,octa-cis-undecaprenyl diphospho-[N-acetyl-alpha-D-glucosaminyl-(1-&gt;4)]-N-acetyl-alpha-D-muramoyl-L-alanyl-D-glutamyl-meso-2,6-diaminopimeloyl-D-alanyl-D-alanine + UDP + H(+). The protein operates within cell wall biogenesis; peptidoglycan biosynthesis. Cell wall formation. Catalyzes the transfer of a GlcNAc subunit on undecaprenyl-pyrophosphoryl-MurNAc-pentapeptide (lipid intermediate I) to form undecaprenyl-pyrophosphoryl-MurNAc-(pentapeptide)GlcNAc (lipid intermediate II). The protein is UDP-N-acetylglucosamine--N-acetylmuramyl-(pentapeptide) pyrophosphoryl-undecaprenol N-acetylglucosamine transferase of Methylobacterium nodulans (strain LMG 21967 / CNCM I-2342 / ORS 2060).